A 241-amino-acid chain; its full sequence is Polycomb group RING finger protein 3 (241 aa).

The RING-type zinc-finger motif lies at 17 to 56 (CRLCSGYLIDATTVTECLHTFCRSCLVKYLEENNTCPTCR). A disordered region spans residues 115 to 148 (AKQHLDPRNGETKADDNSNKETAEEKQEEDNDYH). Residues 117-139 (QHLDPRNGETKADDNSNKETAEE) show a composition bias toward basic and acidic residues. The interaction with BCORL1 stretch occupies residues 131–241 (NSNKETAEEK…LHYRPKMDLL (111 aa)).

Component of a PRC1-like complex that contains PCGF3, RNF2 and RYBP. Interacts with RNF2. Interacts with CBX6, CBX7 and CBX8. Interacts with BCORL1.

Its subcellular location is the nucleus. The protein resides in the nucleoplasm. Its function is as follows. Component of a Polycomb group (PcG) multiprotein PRC1-like complex, a complex class required to maintain the transcriptionally repressive state of many genes, including Hox genes, throughout development. PcG PRC1 complex acts via chromatin remodeling and modification of histones; it mediates monoubiquitination of histone H2A 'Lys-119', rendering chromatin heritably changed in its expressibility. Within the PRC1-like complex, regulates RNF2 ubiquitin ligase activity. Plays a redundant role with PCGF5 as part of a PRC1-like complex that mediates monoubiquitination of histone H2A 'Lys-119' on the X chromosome and is required for normal silencing of one copy of the X chromosome in XX females. This Mus musculus (Mouse) protein is Polycomb group RING finger protein 3 (PcgF3).